The chain runs to 320 residues: tRNA(Ile)-lysidine synthase, chloroplastic (320 aa).

31 to 36 (SGGKDS) is a binding site for ATP.

It belongs to the tRNA(Ile)-lysidine synthase family.

The protein resides in the plastid. It localises to the chloroplast. The enzyme catalyses cytidine(34) in tRNA(Ile2) + L-lysine + ATP = lysidine(34) in tRNA(Ile2) + AMP + diphosphate + H(+). Ligates lysine onto the cytidine present at position 34 of the AUA codon-specific tRNA(Ile) that contains the anticodon CAU, in an ATP-dependent manner. Cytidine is converted to lysidine, thus changing the amino acid specificity of the tRNA from methionine to isoleucine. In Gracilaria tenuistipitata var. liui (Red alga), this protein is tRNA(Ile)-lysidine synthase, chloroplastic.